A 196-amino-acid chain; its full sequence is Nucleoid occlusion factor SlmA (196 aa).

An HTH tetR-type domain is found at 7 to 68 (SNRREEILQA…GLIEFIEEAL (62 aa)). Residues 31–50 (TTAKLAQQVGVSEAALYRHF) constitute a DNA-binding region (H-T-H motif). Residues 65-142 (EEALMSRINR…QLRQILRERK (78 aa)) are a coiled coil.

The protein belongs to the nucleoid occlusion factor SlmA family. In terms of assembly, homodimer. Interacts with FtsZ.

It localises to the cytoplasm. The protein localises to the nucleoid. In terms of biological role, required for nucleoid occlusion (NO) phenomenon, which prevents Z-ring formation and cell division over the nucleoid. Acts as a DNA-associated cell division inhibitor that binds simultaneously chromosomal DNA and FtsZ, and disrupts the assembly of FtsZ polymers. SlmA-DNA-binding sequences (SBS) are dispersed on non-Ter regions of the chromosome, preventing FtsZ polymerization at these regions. The polypeptide is Nucleoid occlusion factor SlmA (Vibrio vulnificus (strain CMCP6)).